A 544-amino-acid polypeptide reads, in one-letter code: Probable protein kinase UbiB (544 aa).

A Protein kinase domain is found at Glu-123–Ser-505. ATP is bound by residues Leu-129–Val-137 and Lys-156. Catalysis depends on Asp-291, which acts as the Proton acceptor. The chain crosses the membrane as a helical span at residues Leu-522–Leu-540.

Belongs to the ABC1 family. UbiB subfamily.

Its subcellular location is the cell inner membrane. Its pathway is cofactor biosynthesis; ubiquinone biosynthesis [regulation]. In terms of biological role, is probably a protein kinase regulator of UbiI activity which is involved in aerobic coenzyme Q (ubiquinone) biosynthesis. This is Probable protein kinase UbiB from Actinobacillus pleuropneumoniae serotype 5b (strain L20).